A 378-amino-acid polypeptide reads, in one-letter code: UPF0754 membrane protein BCQ_0944 (378 aa).

The next 2 helical transmembrane spans lie at 1–21 (MNIW…GGFT) and 357–377 (YLGA…LLFL).

Belongs to the UPF0754 family.

It localises to the cell membrane. The chain is UPF0754 membrane protein BCQ_0944 from Bacillus cereus (strain Q1).